Here is a 516-residue protein sequence, read N- to C-terminus: Glycerol-3-phosphate dehydrogenase 1 (516 aa).

28 to 56 (DVIVIGGGITGVGIALDAATRGLTVALVE) lines the FAD pocket.

Belongs to the FAD-dependent glycerol-3-phosphate dehydrogenase family. Requires FAD as cofactor.

The protein resides in the cytoplasm. It carries out the reaction a quinone + sn-glycerol 3-phosphate = dihydroxyacetone phosphate + a quinol. The protein is Glycerol-3-phosphate dehydrogenase 1 (glpD1) of Mycobacterium bovis (strain ATCC BAA-935 / AF2122/97).